The chain runs to 244 residues: Aspartate/glutamate leucyltransferase (244 aa).

The protein belongs to the R-transferase family. Bpt subfamily.

The protein localises to the cytoplasm. It carries out the reaction N-terminal L-glutamyl-[protein] + L-leucyl-tRNA(Leu) = N-terminal L-leucyl-L-glutamyl-[protein] + tRNA(Leu) + H(+). The catalysed reaction is N-terminal L-aspartyl-[protein] + L-leucyl-tRNA(Leu) = N-terminal L-leucyl-L-aspartyl-[protein] + tRNA(Leu) + H(+). Its function is as follows. Functions in the N-end rule pathway of protein degradation where it conjugates Leu from its aminoacyl-tRNA to the N-termini of proteins containing an N-terminal aspartate or glutamate. The protein is Aspartate/glutamate leucyltransferase of Bordetella bronchiseptica (strain ATCC BAA-588 / NCTC 13252 / RB50) (Alcaligenes bronchisepticus).